The following is a 570-amino-acid chain: Hydroxylamine reductase (570 aa).

4 residues coordinate [4Fe-4S] cluster: Cys5, Cys8, Cys17, and Cys23. Positions 266, 290, 334, 425, 453, 478, 513, and 515 each coordinate hybrid [4Fe-2O-2S] cluster. Position 425 is a cysteine persulfide (Cys425).

It belongs to the HCP family. The cofactor is [4Fe-4S] cluster. Hybrid [4Fe-2O-2S] cluster serves as cofactor.

The protein localises to the cytoplasm. It carries out the reaction A + NH4(+) + H2O = hydroxylamine + AH2 + H(+). In terms of biological role, catalyzes the reduction of hydroxylamine to form NH(3) and H(2)O. This Clostridium botulinum (strain Kyoto / Type A2) protein is Hydroxylamine reductase.